Here is a 568-residue protein sequence, read N- to C-terminus: Nucleolar protein 58 (568 aa).

One can recognise a Nop domain in the interval 293–417 (IAPNLTALVG…LESRLRALEH (125 aa)). The disordered stretch occupies residues 430 to 568 (ANGQQGRQQP…KKKKKKKKDE (139 aa)). Over residues 471 to 482 (EEVKEEKDEKKD) the composition is skewed to basic and acidic residues. A compositionally biased stretch (basic residues) spans 522-533 (RKEAKKAAKAAK). The span at 534–544 (KAAEESGDGDK) shows a compositional bias: basic and acidic residues.

The protein belongs to the NOP5/NOP56 family.

Its subcellular location is the nucleus. It localises to the nucleolus. Its function is as follows. Required for pre-18S rRNA processing. May bind microtubules. This is Nucleolar protein 58 (NOP58) from Cryptococcus neoformans var. neoformans serotype D (strain JEC21 / ATCC MYA-565) (Filobasidiella neoformans).